An 807-amino-acid chain; its full sequence is 85/88 kDa calcium-independent phospholipase A2 (807 aa).

Position 13 is a phosphoserine (serine 13). ANK repeat units lie at residues 120–147, 151–181, 185–215, 219–248, 251–281, 286–312, 316–345, 349–378, and 382–403; these read WTVT…ANST, EGCT…QMDV, KGET…GLNQ, QGLT…RCNI, PGGF…QIHS, YGAS…DVDS, SGNT…NAGA, HGNT…EVDT, and FGET…KALL. The next 2 helical transmembrane spans lie at 481–501 and 512–532; these read LLCL…LIAI and LFDW…ILHS. The 185-residue stretch at 482 to 666 folds into the PNPLA domain; the sequence is LCLDGGGVKG…LANNPTLDAM (185 aa). A GXGXXG motif is present at residues 486-491; it reads GGGVKG. The GXSXG signature appears at 518-522; that stretch reads GTSTG. Serine 520 (nucleophile) is an active-site residue. Residue aspartate 653 is the Proton acceptor of the active site. The DGA/G signature appears at 653–655; it reads DGG. The segment at 678-687 is calmodulin-binding (1-9-14 motif); sequence RKGQGNKVKK. The calmodulin-binding (IQ motif) stretch occupies residues 749–760; the sequence is AWCEMVGIQYFR.

As to quaternary structure, homodimer formed by catalytic domains tightly interacting through a large hydrophobic interface. The contact area involves 3 alpha helices, several loops and a part of the beta sheet from each monomer. Both active sites of the dimer are in close proximity adopting an open conformation that provide sufficient space for phospholipid access and favoring cooperativity in deacylation-reacylation reactions. Each monomer has 9 ankyrin repeats stacked side-by-side in an elongated structure oriented outwards from the catalytic core. As to expression, expressed in pancreatic beta-cells. Expressed in skeletal muscle (at protein level).

It is found in the cytoplasm. It localises to the cell membrane. Its subcellular location is the mitochondrion. The protein localises to the cell projection. The protein resides in the pseudopodium. The catalysed reaction is a 1,2-diacyl-sn-glycero-3-phosphocholine + H2O = a 1-acyl-sn-glycero-3-phosphocholine + a fatty acid + H(+). It carries out the reaction a 1-O-alkyl-2-acyl-sn-glycero-3-phosphocholine + H2O = a 1-O-alkyl-sn-glycero-3-phosphocholine + a fatty acid + H(+). It catalyses the reaction 1,2-dihexadecanoyl-sn-glycero-3-phosphocholine + H2O = 1-hexadecanoyl-sn-glycero-3-phosphocholine + hexadecanoate + H(+). The enzyme catalyses 1-hexadecanoyl-2-(9Z-octadecenoyl)-sn-glycero-3-phosphocholine + H2O = 1-hexadecanoyl-sn-glycero-3-phosphocholine + (9Z)-octadecenoate + H(+). The catalysed reaction is 1-hexadecanoyl-2-(9Z,12Z-octadecadienoyl)-sn-glycero-3-phosphocholine + H2O = (9Z,12Z)-octadecadienoate + 1-hexadecanoyl-sn-glycero-3-phosphocholine + H(+). It carries out the reaction 1-hexadecanoyl-2-(5Z,8Z,11Z,14Z-eicosatetraenoyl)-sn-glycero-3-phosphocholine + H2O = 1-hexadecanoyl-sn-glycero-3-phosphocholine + (5Z,8Z,11Z,14Z)-eicosatetraenoate + H(+). It catalyses the reaction 1-octadecanoyl-2-(5Z,8Z,11Z,14Z-eicosatetraenoyl)-sn-glycero-3-phosphocholine + H2O = 1-octadecanoyl-sn-glycero-3-phosphocholine + (5Z,8Z,11Z,14Z)-eicosatetraenoate + H(+). The enzyme catalyses 1-hexadecanoyl-2-(5Z,8Z,11Z,14Z-eicosatetraenoyl)-sn-glycero-3-phosphoethanolamine + H2O = 1-hexadecanoyl-sn-glycero-3-phosphoethanolamine + (5Z,8Z,11Z,14Z)-eicosatetraenoate + H(+). The catalysed reaction is 1,2-dihexadecanoyl-sn-glycero-3-phosphate + H2O = 1-hexadecanoyl-sn-glycero-3-phosphate + hexadecanoate + H(+). It carries out the reaction a 1-acyl-sn-glycero-3-phosphocholine + H2O = sn-glycerol 3-phosphocholine + a fatty acid + H(+). It catalyses the reaction 1-hexadecanoyl-sn-glycero-3-phosphocholine + H2O = sn-glycerol 3-phosphocholine + hexadecanoate + H(+). The enzyme catalyses 1-(5Z,8Z,11Z,14Z-eicosatetraenoyl)-sn-glycero-3-phosphocholine + H2O = sn-glycerol 3-phosphocholine + (5Z,8Z,11Z,14Z)-eicosatetraenoate + H(+). The catalysed reaction is 2-(5Z,8Z,11Z,14Z)-eicosatetraenoyl-sn-glycero-3-phosphocholine + H2O = sn-glycerol 3-phosphocholine + (5Z,8Z,11Z,14Z)-eicosatetraenoate + H(+). It carries out the reaction 1-O-hexadecyl-2-(5Z,8Z,11Z,14Z)-eicosatetraenoyl-sn-glycero-3-phosphocholine + H2O = 1-O-hexadecyl-sn-glycero-3-phosphocholine + (5Z,8Z,11Z,14Z)-eicosatetraenoate + H(+). It catalyses the reaction 1-O-hexadecyl-2-acetyl-sn-glycero-3-phosphocholine + H2O = 1-O-hexadecyl-sn-glycero-3-phosphocholine + acetate + H(+). The enzyme catalyses hexadecanoyl-CoA + H2O = hexadecanoate + CoA + H(+). The catalysed reaction is 1',3'-bis[1,2-di-(9Z-octadecenoyl)-sn-glycero-3-phospho]-glycerol + H2O = 1'-[1,2-di-(9Z-octadecenoyl)-sn-glycero-3-phospho]-3'-[1-(9Z-octadecenoyl)-sn-glycero-3-phospho]-glycerol + (9Z)-octadecenoate + H(+). It carries out the reaction 1'-[1,2-di-(9Z-octadecenoyl)-sn-glycero-3-phospho]-3'-[1-(9Z-octadecenoyl)-sn-glycero-3-phospho]-glycerol + H2O = 1',3'-bis-[1-(9Z-octadecenoyl)-sn-glycero-3-phospho]-glycerol + (9Z)-octadecenoate + H(+). It catalyses the reaction 1',3'-bis-[1,2-di-(9Z,12Z-octadecadienoyl)-sn-glycero-3-phospho]-glycerol + H2O = 1'-[1,2-di-(9Z,12Z-octadecadienoyl)-sn-glycero-3-phospho]-3'-[1-(9Z,12Z-octadecadienoyl)-sn-glycero-3-phospho]-glycerol + (9Z,12Z)-octadecadienoate + H(+). The enzyme catalyses 1-octadecanoyl-2-(15-hydroxy-(5Z,8Z,11Z,13E)-eicosatetraenoyl)-sn-glycero-3-phosphoethanolamine + H2O = 1-octadecanoyl-sn-glycero-3-phosphoethanolamine + 15-hydroxy-(5Z,8Z,11Z,13E)-eicosatetraenoate + H(+). With respect to regulation, activated by ATP. Inhibited by calcium-activated calmodulin. Inhibited by bromoenol lactone (BEL). Calcium-independent phospholipase involved in phospholipid remodeling with implications in cellular membrane homeostasis, mitochondrial integrity and signal transduction. Hydrolyzes the ester bond of the fatty acyl group attached at sn-1 or sn-2 position of phospholipids (phospholipase A1 and A2 activity respectively), producing lysophospholipids that are used in deacylation-reacylation cycles. Hydrolyzes both saturated and unsaturated long fatty acyl chains in various glycerophospholipid classes such as phosphatidylcholines, phosphatidylethanolamines and phosphatidates, with a preference for hydrolysis at sn-2 position. Can further hydrolyze lysophospholipids carrying saturated fatty acyl chains (lysophospholipase activity). Upon oxidative stress, contributes to remodeling of mitochondrial phospholipids in pancreatic beta cells, in a repair mechanism to reduce oxidized lipid content. Preferentially hydrolyzes oxidized polyunsaturated fatty acyl chains from cardiolipins, yielding monolysocardiolipins that can be reacylated with unoxidized fatty acyls to regenerate native cardiolipin species. Hydrolyzes oxidized glycerophosphoethanolamines present in pancreatic islets, releasing oxidized polyunsaturated fatty acids such as hydroxyeicosatetraenoates (HETEs). Has thioesterase activity toward fatty-acyl CoA releasing CoA-SH known to facilitate fatty acid transport and beta-oxidation in mitochondria particularly in skeletal muscle. Plays a role in regulation of membrane dynamics and homeostasis. Selectively hydrolyzes sn-2 arachidonoyl group in plasmalogen phospholipids, structural components of lipid rafts and myelin. Regulates F-actin polymerization at the pseudopods, which is required for both speed and directionality of MCP1/CCL2-induced monocyte chemotaxis. Targets membrane phospholipids to produce potent lipid signaling messengers. Generates lysophosphatidate (LPA, 1-acyl-glycerol-3-phosphate), which acts via G-protein receptors in various cell types. Has phospholipase A2 activity toward platelet-activating factor (PAF, 1-O-alkyl-2-acetyl-sn-glycero-3-phosphocholine), likely playing a role in inactivation of this potent pro-inflammatory signaling lipid. In response to glucose, amplifies calcium influx in pancreatic beta cells to promote INS secretion. This chain is 85/88 kDa calcium-independent phospholipase A2 (Pla2g6), found in Rattus norvegicus (Rat).